Reading from the N-terminus, the 357-residue chain is Peptide chain release factor 1 (357 aa).

Q236 carries the post-translational modification N5-methylglutamine.

It belongs to the prokaryotic/mitochondrial release factor family. Post-translationally, methylated by PrmC. Methylation increases the termination efficiency of RF1.

It is found in the cytoplasm. Its function is as follows. Peptide chain release factor 1 directs the termination of translation in response to the peptide chain termination codons UAG and UAA. This chain is Peptide chain release factor 1 (prfA), found in Mycobacterium bovis (strain ATCC BAA-935 / AF2122/97).